Reading from the N-terminus, the 804-residue chain is Leucine--tRNA ligase (804 aa).

The short motif at 40–51 (PYPSGQGLHVGH) is the 'HIGH' region element. A 'KMSKS' region motif is present at residues 576 to 580 (KMSKS). K579 lines the ATP pocket.

It belongs to the class-I aminoacyl-tRNA synthetase family.

It localises to the cytoplasm. It catalyses the reaction tRNA(Leu) + L-leucine + ATP = L-leucyl-tRNA(Leu) + AMP + diphosphate. The polypeptide is Leucine--tRNA ligase (Oceanobacillus iheyensis (strain DSM 14371 / CIP 107618 / JCM 11309 / KCTC 3954 / HTE831)).